The chain runs to 272 residues: ATP synthase subunit delta (272 aa).

The protein belongs to the ATPase delta chain family. In terms of assembly, F-type ATPases have 2 components, F(1) - the catalytic core - and F(0) - the membrane proton channel. F(1) has five subunits: alpha(3), beta(3), gamma(1), delta(1), epsilon(1). F(0) has three main subunits: a(1), b(2) and c(10-14). The alpha and beta chains form an alternating ring which encloses part of the gamma chain. F(1) is attached to F(0) by a central stalk formed by the gamma and epsilon chains, while a peripheral stalk is formed by the delta and b chains.

The protein localises to the cell membrane. Its function is as follows. F(1)F(0) ATP synthase produces ATP from ADP in the presence of a proton or sodium gradient. F-type ATPases consist of two structural domains, F(1) containing the extramembraneous catalytic core and F(0) containing the membrane proton channel, linked together by a central stalk and a peripheral stalk. During catalysis, ATP synthesis in the catalytic domain of F(1) is coupled via a rotary mechanism of the central stalk subunits to proton translocation. Functionally, this protein is part of the stalk that links CF(0) to CF(1). It either transmits conformational changes from CF(0) to CF(1) or is implicated in proton conduction. The protein is ATP synthase subunit delta of Corynebacterium jeikeium (strain K411).